We begin with the raw amino-acid sequence, 314 residues long: L-lactate dehydrogenase 2 (314 aa).

NAD(+)-binding positions include Val-16, Asp-37, Lys-42, Tyr-68, and 82–83 (GV). Gln-85 and Arg-91 together coordinate substrate. Residues Ser-104, 121 to 123 (ASN), and Thr-146 contribute to the NAD(+) site. 123 to 126 (NPVD) serves as a coordination point for substrate. Position 151–154 (151–154 (DTTR)) interacts with substrate. Beta-D-fructose 1,6-bisphosphate-binding residues include Arg-156 and His-171. His-178 serves as the catalytic Proton acceptor. A Phosphotyrosine modification is found at Tyr-223. A substrate-binding site is contributed by Thr-232.

The protein belongs to the LDH/MDH superfamily. LDH family. In terms of assembly, homotetramer.

It localises to the cytoplasm. The enzyme catalyses (S)-lactate + NAD(+) = pyruvate + NADH + H(+). Its pathway is fermentation; pyruvate fermentation to lactate; (S)-lactate from pyruvate: step 1/1. Its activity is regulated as follows. Allosterically activated by fructose 1,6-bisphosphate (FBP). Functionally, catalyzes the conversion of lactate to pyruvate. This is L-lactate dehydrogenase 2 from Lactococcus lactis subsp. lactis (strain IL1403) (Streptococcus lactis).